Here is a 96-residue protein sequence, read N- to C-terminus: Interleukin-8 (96 aa).

The N-terminal stretch at 1 to 22 (MTSKLAIALLATFMLSAALCEA) is a signal peptide. Citrulline is present on arginine 27. Intrachain disulfides connect cysteine 34/cysteine 61 and cysteine 36/cysteine 78.

It belongs to the intercrine alpha (chemokine CxC) family. As to quaternary structure, homodimer. Interacts with TNFAIP6 (via Link domain); this interaction interferes with chemokine binding to glycosaminoglycans. In terms of processing, citrullination at Arg-27 prevents proteolysis, and dampens tissue inflammation, it also enhances leukocytosis, possibly through impaired chemokine clearance from the blood circulation.

The protein resides in the secreted. Its function is as follows. Chemotactic factor that mediates inflammatory response by attracting neutrophils, basophils, and T-cells to clear pathogens and protect the host from infection. Also plays an important role in neutrophil activation. Released in response to an inflammatory stimulus, exerts its effect by binding to the G-protein-coupled receptors CXCR1 and CXCR2, primarily found in neutrophils, monocytes and endothelial cells. G-protein heterotrimer (alpha, beta, gamma subunits) constitutively binds to CXCR1/CXCR2 receptor and activation by IL8 leads to beta and gamma subunits release from Galpha (GNAI2 in neutrophils) and activation of several downstream signaling pathways including PI3K and MAPK pathways. This chain is Interleukin-8 (CXCL8), found in Dasypus novemcinctus (Nine-banded armadillo).